Consider the following 517-residue polypeptide: MAMAMALRRLSSSIDKPIRPLIRSTSCYMSSLPSEAVDEKERSRVTWPKQLNAPLEEVDPEIADIIEHEKARQWKGLELIPSENFTSVSVMQAVGSVMTNKYSEGYPGARYYGGNEYIDMAETLCQKRALEAFRLDPEKWGVNVQPLSGSPANFHVYTALLKPHERIMALDLPHGGHLSHGYQTDTKKISAVSIFFETMPYRLDESTGYIDYDQMEKSATLFRPKLIVAGASAYARLYDYARIRKVCNKQKAVMLADMAHISGLVAANVIPSPFDYADVVTTTTHKSLRGPRGAMIFFRKGVKEINKQGKEVLYDFEDKINQAVFPGLQGGPHNHTITGLAVALKQATTSEYKAYQEQVLSNSAKFAQTLMERGYELVSGGTDNHLVLVNLKPKGIDGSRVEKVLEAVHIASNKNTVPGDVSAMVPGGIRMGTPALTSRGFVEEDFAKVAEYFDKAVTIALKVKSEAQGTKLKDFVSAMESSSTIQSEIAKLRHEVEEFAKQFPTIGFEKETMKYKN.

The N-terminal 30 residues, 1–30 (MAMAMALRRLSSSIDKPIRPLIRSTSCYMS), are a transit peptide targeting the mitochondrion. Lysine 286 is modified (N6-(pyridoxal phosphate)lysine).

It belongs to the SHMT family. Homotetramer. Interacts with GLU1. Interacts with UBP16. The cofactor is pyridoxal 5'-phosphate. Post-translationally, ubiquitinated. As to expression, ubiquitous. Mostly expressed in leaves, less abundant in stems, flowers and siliques, and barely detectable in roots.

The protein localises to the mitochondrion. It localises to the cytoplasm. The catalysed reaction is (6R)-5,10-methylene-5,6,7,8-tetrahydrofolate + glycine + H2O = (6S)-5,6,7,8-tetrahydrofolate + L-serine. The protein operates within one-carbon metabolism; tetrahydrofolate interconversion. Its function is as follows. Functions in the photorespiratory pathway in catalyzing the interconversion of serine and glycine. Involved in controlling cell damage caused by abiotic stress, such as high light and salt and the hypersensitive defense response of plants. This Arabidopsis thaliana (Mouse-ear cress) protein is Serine hydroxymethyltransferase 1, mitochondrial.